A 674-amino-acid chain; its full sequence is Polyunsaturated fatty acid 5-lipoxygenase (674 aa).

In terms of domain architecture, PLAT spans 2–118 (PSYTVTVATG…EIVLRDGRAK (117 aa)). Ca(2+) contacts are provided by glycine 17, threonine 18, aspartate 19, asparagine 44, aspartate 45, glutamate 47, aspartate 79, and aspartate 80. A Lipoxygenase domain is found at 119–674 (LARDDQIHIL…PDRIPNSVAI (556 aa)). Serine 272 is subject to Phosphoserine. Fe cation-binding residues include histidine 368 and histidine 373. Serine 524 is modified (phosphoserine). Fe cation-binding residues include histidine 551, asparagine 555, and isoleucine 674.

Belongs to the lipoxygenase family. In terms of assembly, homodimer. Interacts with ALOX5AP and LTC4S. Interacts with COTL1, the interaction is required for stability and efficient catalytic activity. Interacts with PIK3R1; this interaction bridges ALOX5 with CD40 after CD40 ligation in B cells and leads to the production of reactive oxygen species (ROS). Interacts (via PLAT domain) with DICER1 (via Dicer dsRNA-binding fold domain); this interaction enhances arachidonate 5-lipoxygenase activity and modifies the miRNA precursor processing activity of DICER1. The cofactor is Fe cation. In terms of processing, serine phosphorylation by MAPKAPK2 is stimulated by arachidonic acid. Phosphorylation on Ser-524 by PKA has an inhibitory effect. Phosphorylation on Ser-272 prevents export from the nucleus. Phosphorylation at Ser-524 is stimulated by 8-bromo-3',5'-cyclic AMP or prostaglandin E2. In terms of tissue distribution, expressed in skin Langerhans cells and their emigrated counterparts in draining lymph nodes. Highly expressed in circulating leukocytes.

It is found in the cytoplasm. Its subcellular location is the nucleus matrix. It localises to the nucleus membrane. The protein resides in the perinuclear region. The protein localises to the cytosol. It is found in the nucleus envelope. Its subcellular location is the nucleus intermembrane space. The enzyme catalyses (5Z,8Z,11Z,14Z)-eicosatetraenoate + O2 = (5S)-hydroperoxy-(6E,8Z,11Z,14Z)-eicosatetraenoate. It carries out the reaction (5Z,8Z,11Z,14Z)-eicosatetraenoate + O2 = leukotriene A4 + H2O. It catalyses the reaction (5Z,8Z,11Z,14Z)-eicosatetraenoate + O2 = (8S)-hydroperoxy-(5Z,9E,11Z,14Z)-eicosatetraenoate. The catalysed reaction is (5Z,8Z,11Z,14Z)-eicosatetraenoate + O2 = (12S)-hydroperoxy-(5Z,8Z,10E,14Z)-eicosatetraenoate. The enzyme catalyses 18-HEPE + O2 = (5S)-hydroperoxy-18-hydroxy-(7E,9E,11Z,14Z,16E)-eicosapentaenoate. It carries out the reaction (18R)-hydroxy-(5Z,8Z,11Z,14Z,16E)-eicosapentaenoate + O2 = (5S)-hydroperoxy-(18R)-hydroxy-(6E,8Z,11Z,14Z,16E)-eicosapentaenoate. It catalyses the reaction (18S)-hydroxy-(5Z,8Z,11Z,14Z,16E)-eicosapentaenoate + O2 = (5S)-hydroperoxy-(18S)-hydroxy-(6E,8Z,11Z,14Z,16E)-eicosapentaenoate. The catalysed reaction is (5S)-hydroperoxy-(18S)-hydroxy-(6E,8Z,11Z,14Z,16E)-eicosapentaenoate = (5S,6S)-epoxy-(18S)-hydroxy-(7E,9E,11Z,14Z,16E)-eicosapentaenoate + H2O. The enzyme catalyses (5S)-hydroperoxy-(18R)-hydroxy-(6E,8Z,11Z,14Z,16E)-eicosapentaenoate = (5S,6S)-epoxy-(18R)-hydroxy-(7E,9E,11Z,14Z,16E)-eicosapentaenoate + H2O. It carries out the reaction (5S)-hydroperoxy-18-hydroxy-(7E,9E,11Z,14Z,16E)-eicosapentaenoate = (5S,6S)-epoxy-18-hydroxy-(7E,9E,11Z,14Z,16E)-eicosapentaenoate + H2O. It catalyses the reaction (15S)-hydroxy-(5Z,8Z,11Z,13E)-eicosatetraenoate + O2 = (5S)-hydroperoxy-(15S)-hydroxy-(6E,8Z,11Z,13E)-eicosatetraenoate. The catalysed reaction is (5S)-hydroperoxy-(6E,8Z,11Z,14Z)-eicosatetraenoate = leukotriene A4 + H2O. The enzyme catalyses (5Z,8Z)-eicosadienoate + O2 = (5S)-hydroperoxy-(6E,8Z)-eicosadienoate. It carries out the reaction (12S)-hydroxy-(5Z,8Z,10E,14Z)-eicosatetraenoate + O2 = (5S)-hydroperoxy-(12S)-hydroxy-(6E,8Z,10E,14Z)-eicosatetraenoate. It catalyses the reaction (5Z,8Z,11Z,14Z,17Z)-eicosapentaenoate + O2 = 5-hydroperoxy-(6E,8Z,11Z,14Z,17Z)-eicosapentaenoate. The catalysed reaction is (4Z,7Z,10Z,13Z,16Z,19Z)-docosahexaenoate + O2 = (14S)-hydroperoxy-(4Z,7Z,10Z,12E,16Z,19Z)-docosahexaenoate. The enzyme catalyses (4Z,7Z,10Z,13Z,16Z,19Z)-docosahexaenoate + O2 = (7S)-hydroperoxy-(4Z,8E,10Z,13Z,16Z,19Z)-docosahexaenoate. It carries out the reaction (4Z,7Z,10Z,13Z,16Z,19Z)-docosahexaenoate + O2 = (17S)-hydroperoxy-(4Z,7Z,10Z,13Z,15E,19Z)-docosahexaenoate. It functions in the pathway lipid metabolism; leukotriene A4 biosynthesis. Catalyzes the oxygenation of arachidonate to 5-hydroperoxyeicosatetraenoate (5-HPETE) followed by the dehydration to 5,6- epoxyeicosatetraenoate (Leukotriene A4/LTA4), the first two steps in the biosynthesis of leukotrienes, which are potent mediators of inflammation. Also catalyzes the oxygenation of arachidonic acid into 8-hydroperoxyicosatetraenoic acid (8-HPETE) and 12-hydroperoxyicosatetraenoic acid (12-HPETE). Displays lipoxin synthase activity being able to convert (15S)-HETE into a conjugate tetraene. Although arachidonate is the preferred substrate, this enzyme can also metabolize oxidized fatty acids derived from arachidonate such as (15S)-HETE, eicosapentaenoate (EPA) such as (18R)- and (18S)-HEPE or docosahexaenoate (DHA) which lead to the formation of specialized pro-resolving mediators (SPM) lipoxin and resolvins E and D respectively, therefore it participates in anti-inflammatory responses. Oxidation of DHA directly inhibits endothelial cell proliferation and sprouting angiogenesis via peroxisome proliferator-activated receptor gamma (PPARgamma). It does not catalyze the oxygenation of linoleic acid and does not convert (5S)-HETE to lipoxin isomers. In addition to inflammatory processes, participates in dendritic cell migration, wound healing through an antioxidant mechanism based on heme oxygenase-1 (HO-1) regulation expression, monocyte adhesion to the endothelium via ITGAM expression on monocytes. Moreover, it helps establish an adaptive humoral immunity by regulating primary resting B cells and follicular helper T cells and participates in the CD40-induced production of reactive oxygen species (ROS) after CD40 ligation in B cells through interaction with PIK3R1 that bridges ALOX5 with CD40. May also play a role in glucose homeostasis, regulation of insulin secretion and palmitic acid-induced insulin resistance via AMPK. Can regulate bone mineralization and fat cell differentiation increases in induced pluripotent stem cells. This chain is Polyunsaturated fatty acid 5-lipoxygenase, found in Mus musculus (Mouse).